The sequence spans 414 residues: Na(+)-translocating NADH-quinone reductase subunit B (414 aa).

Helical transmembrane passes span 56–76, 129–149, and 164–184; these read IMIMVWFAVFPAMFWGMYNAG, FLPIYATVFLVGGFWEVLFCM, and ILFALIVPPTLPLWQAALGIT. An FMN phosphoryl threonine modification is found at T236. The next 5 helical transmembrane spans lie at 268 to 288, 297 to 317, 325 to 345, 358 to 378, and 381 to 401; these read IPGSIGEVSTLALMIGAAMIV, IIAGVMIGMIAVSTLFNVIGS, MPWHWHLVLGGFAFGMFFMAT, WWYGILIGAMCVMIRVVNPAY, and GMMLAILFANLFAPLFDHVVI.

It belongs to the NqrB/RnfD family. As to quaternary structure, composed of six subunits; NqrA, NqrB, NqrC, NqrD, NqrE and NqrF. Requires FMN as cofactor.

The protein localises to the cell inner membrane. The enzyme catalyses a ubiquinone + n Na(+)(in) + NADH + H(+) = a ubiquinol + n Na(+)(out) + NAD(+). Its activity is regulated as follows. This reaction is tightly coupled to the Na(+) pumping activity and specifically requires Na(+) for activity. Inhibited by korormicin and 2-N-heptyl-4-hydroxyquinoline N-oxide (HQNO). In terms of biological role, NQR complex catalyzes the reduction of ubiquinone-1 to ubiquinol by two successive reactions, coupled with the transport of Na(+) ions from the cytoplasm to the periplasm. NqrA to NqrE are probably involved in the second step, the conversion of ubisemiquinone to ubiquinol. The protein is Na(+)-translocating NADH-quinone reductase subunit B of Vibrio alginolyticus.